The sequence spans 732 residues: Nephrocystin-1 (732 aa).

The stretch at 3–105 (ARRQRDPLQA…LQGLAVTISR (103 aa)) forms a coiled coil. Phosphotyrosine; by FAK2 is present on Tyr-46. 2 disordered regions span residues 103–153 (ISRE…KWST) and 205–244 (TYLEPYSEEEEGQESSEEGSEEDVEAVDETADGAEVKQRT). Composition is skewed to acidic residues over residues 115 to 145 (TEEEEESESEDSEDSGGEEEDAEEEEEEKEE) and 210 to 236 (YSEEEEGQESSEEGSEEDVEAVDETAD). 3 positions are modified to phosphoserine; by CK2: Ser-121, Ser-123, and Ser-126. A coiled-coil region spans residues 127–150 (EDSGGEEEDAEEEEEEKEENESHK). The SH3 domain maps to 152–212 (STGEEYIAVG…PRTYLEPYSE (61 aa)). Position 349 is a phosphotyrosine; by FAK2 (Tyr-349). Tyr-721 carries the phosphotyrosine; by SRC modification.

Belongs to the nephrocystin-1 family. As to quaternary structure, interacts with BCAR1, PTK2B/PYK2 and tensin. Interacts with INVS and NPHP3. Interacts with PACS1; the interaction is dependent on NPHP1 phosphorylation by CK2. Interacts with KIF7. Interacts with AHI1 and TNK2. Interacts with NPHP4 in a complex containing NPHP1, NPHP4 and RPGRIP1L. Interacts with IQCB1; the interaction likely requires additional interactors. Interacts with ANKS3. Interacts with SPATA7. Interacts with FLNA. Post-translationally, phosphorylation by CK2 is required for the interaction with PACS1 and the targeting to the base region of cilia. In terms of tissue distribution, widespread expression, with highest levels in pituitary gland, spinal cord, thyroid gland, testis, skeletal muscle, lymph node and trachea. Weakly expressed in heart, kidney and pancreas. Expressed in nasal epithelial cells (at protein level). Expressed in the renal collecting duct (at protein level).

Its subcellular location is the cell junction. The protein localises to the adherens junction. The protein resides in the cell projection. It is found in the cilium. It localises to the cytoplasm. Its subcellular location is the cytoskeleton. The protein localises to the cilium axoneme. The protein resides in the tight junction. Functionally, together with BCAR1 it may play a role in the control of epithelial cell polarity. Involved in the organization of apical junctions in kidney cells together with NPHP4 and RPGRIP1L/NPHP8. Does not seem to be strictly required for ciliogenesis. Seems to help to recruit PTK2B/PYK2 to cell matrix adhesions, thereby initiating phosphorylation of PTK2B/PYK2 and PTK2B/PYK2-dependent signaling. May play a role in the regulation of intraflagellar transport (IFT) during cilia assembly. Required for normal retina development. In connecting photoreceptor cilia influences the movement of some IFT proteins such as IFT88 and WDR19. Involved in spermatogenesis. The chain is Nephrocystin-1 (NPHP1) from Homo sapiens (Human).